Consider the following 110-residue polypeptide: PCNA-associated factor (110 aa).

Residue K15 forms a Glycyl lysine isopeptide (Lys-Gly) (interchain with G-Cter in ubiquitin) linkage. A D-box motif is present at residues 23 to 34 (RKVLGSSTFVTN). An N6-acetyllysine; alternate modification is found at K24. K24 participates in a covalent cross-link: Glycyl lysine isopeptide (Lys-Gly) (interchain with G-Cter in ubiquitin); alternate. Phosphoserine is present on residues S28 and S71. Low complexity predominate over residues 28-39 (SSTFVTNSSSSS). A disordered region spans residues 28-110 (SSTFVTNSSS…QPDHRDDENE (83 aa)). The PIP-box signature appears at 61-71 (QKGIGEFFRLS). Positions 71–80 (SPKESKKENQ) are enriched in basic and acidic residues. A KEN box motif is present at residues 77-79 (KEN). Positions 84–96 (EAGTSGLGKAKRK) match the Initiation motif motif.

Interacts (when monoubiquitinated at Lys-15 and Lys-24) with PCNA. Interacts with isoform 2/p33ING1b of ING1. Interacts with BRCA1. Post-translationally, monoubiquitinated at Lys-15 and Lys-24 during normal S phase, promoting its association with PCNA. Also diubiquitinated at these 2 sites. Following DNA damage, monoubiquitin chains at Lys-15 and Lys-24 are probably extended, leading to disrupt the interaction with PCNA. Polyubiquitinated by the APC/C complex at the mitotic exit, leading to its degradation by the proteasome.

It localises to the nucleus. The protein resides in the cytoplasm. It is found in the perinuclear region. Its function is as follows. PCNA-binding protein that acts as a regulator of DNA repair during DNA replication. Following DNA damage, the interaction with PCNA is disrupted, facilitating the interaction between monoubiquitinated PCNA and the translesion DNA synthesis DNA polymerase eta (POLH) at stalled replisomes, facilitating the bypass of replication-fork-blocking lesions. Also acts as a regulator of centrosome number. The sequence is that of PCNA-associated factor from Mus musculus (Mouse).